Consider the following 641-residue polypeptide: MEVAGAQAGILPLLLRHPASLRGSLSLSCGGARRSWAAAAATAEGGGGEEGRGYERVPMDTPGAYRLVDRATGRSVIVWGGTDDVSMPSPAVLSTTTRVPDRPKENGRSTSIGNFGRLKAQKVKVLARRSAHLKREDSGRISTSRFSESPSDESDEDGTYFERDRARNTRQNSRSRDDKTRGAHSLNSVLRQYRGADDLDFPGSEATSGSKRWGNISDVTFGRQNQRQKGPLDSGFFSRRSFKEIGCSDEILGALRSFGFPRPSHIQAMAYRPVLEGKSCIIGDQSGSGKTLAYLCPVVQNLRKEEVEGLHRSSPRNPRVVVLTPTAELASQVLNNCRSISKSGVPFRSMVATGGFRQKTQLESLDQELDVLIATPGRFLYLLQEGFVQLNNLRCVVLDEVDILYGEESFEQVLHQLITVAPLTTQYLFVTATLPLDIYNKVVETFPDCELIMGPGVHRTSSRLEEILVDCSGDDNEEKNPETAFSNKKSALVKIIEESPVRKTIIFCNKIETCRKVENALRRVDRKASQIKVLPFHAALDQQQRIANIKEFLNKQTADSMFLVCTDRASRGIDFANVNHVVLFDYPRDPSEYVRRVGRTARGASGNGKAFVFAVGKQVSLARRVMERNIKGHPLHDVPCV.

Disordered stretches follow at residues Ser86–Phe115, Arg129–Val189, and Asp197–Ile216. Over residues Pro150–Thr159 the composition is skewed to acidic residues. The short motif at Arg240–Ala268 is the Q motif element. Residues Tyr271 to Ile452 form the Helicase ATP-binding domain. Asp284 to Thr291 serves as a coordination point for ATP. A DEAD box motif is present at residues Asp399 to Asp402. One can recognise a Helicase C-terminal domain in the interval Asn487–Val641.

This sequence belongs to the DEAD box helicase family.

The enzyme catalyses ATP + H2O = ADP + phosphate + H(+). Probably involved in resistance to biotic and abiotic stresses. Confers tolerance to oxidative stress and mediates pathogenesis-related (PR) genes expression. Exhibits RNA-dependent ATPase and ATP-dependent RNA helicase activities in vitro. The polypeptide is DEAD-box ATP-dependent RNA helicase 50 (Oryza sativa subsp. japonica (Rice)).